Consider the following 146-residue polypeptide: Large ribosomal subunit protein bL19 (146 aa).

The disordered stretch occupies residues 116–146 (ADRKRIDQDRAAERAAKEEAQKAQEPKASQE). The segment covering 119-146 (KRIDQDRAAERAAKEEAQKAQEPKASQE) has biased composition (basic and acidic residues).

As to quaternary structure, part of the 50S risobomal subunit. Contacts protein L14. Forms a bridge to the 30S subunit in the 70S ribosome, contacting the 16S rRNA.

Contacts the 16S rRNA of the 30S subunit (part of bridge B6), connecting the 2 subunits. The protein is Large ribosomal subunit protein bL19 (rplS) of Thermus thermophilus (strain ATCC 27634 / DSM 579 / HB8).